The sequence spans 842 residues: G-type lectin S-receptor-like serine/threonine-protein kinase At1g11330 (842 aa).

The N-terminal stretch at 1–29 (MVVSVTIRRRFVLLLLACTCLLSRRLCFG) is a signal peptide. At 30–444 (EDRITFSSPI…AHSELKTHSN (415 aa)) the chain is on the extracellular side. The Bulb-type lectin domain occupies 32-157 (RITFSSPIKD…RNNGEILWES (126 aa)). Asn63, Asn94, Asn122, Asn130, Asn196, and Asn260 each carry an N-linked (GlcNAc...) asparagine glycan. The 37-residue stretch at 294–330 (PYTDCDAYGRCGRFGSCHAGENPPCKCVKGFVPKNNT) folds into the EGF-like; atypical domain. Intrachain disulfides connect Cys298–Cys310 and Cys304–Cys318. Asn328, Asn336, Asn354, and Asn396 each carry an N-linked (GlcNAc...) asparagine glycan. Positions 349–435 (CERQRNVSNG…SGIDLFIRVA (87 aa)) constitute a PAN domain. 2 disulfides stabilise this stretch: Cys389–Cys410 and Cys393–Cys399. A helical transmembrane segment spans residues 445–465 (LAVMIAAPVIGVMLIAAVCVL). Residues 466–842 (LACRKYKKRP…DVSLTAVTGR (377 aa)) are Cytoplasmic-facing. In terms of domain architecture, Protein kinase spans 524 to 810 (FSLRNKLGQG…SLADPKQPAF (287 aa)). ATP is bound by residues 530-538 (LGQGGFGPV) and Lys552. 2 positions are modified to phosphoserine: Ser558 and Ser573. A caM-binding region spans residues 613-630 (MKQKILDWKTRFNIMEGI). Catalysis depends on Asp649, which acts as the Proton acceptor. Phosphoserine occurs at positions 653 and 666. A Phosphothreonine modification is found at Thr683. 4 positions are modified to phosphoserine: Ser726, Ser727, Ser821, and Ser830. The disordered stretch occupies residues 814–842 (RGASEAESSDQSSQKVSINDVSLTAVTGR). A compositionally biased stretch (low complexity) spans 818–827 (EAESSDQSSQ). Residues 828-842 (KVSINDVSLTAVTGR) show a composition bias toward polar residues. Residue Thr837 is modified to Phosphothreonine.

It belongs to the protein kinase superfamily. Ser/Thr protein kinase family.

It localises to the cell membrane. The catalysed reaction is L-seryl-[protein] + ATP = O-phospho-L-seryl-[protein] + ADP + H(+). The enzyme catalyses L-threonyl-[protein] + ATP = O-phospho-L-threonyl-[protein] + ADP + H(+). This chain is G-type lectin S-receptor-like serine/threonine-protein kinase At1g11330, found in Arabidopsis thaliana (Mouse-ear cress).